Reading from the N-terminus, the 253-residue chain is NADH-quinone oxidoreductase subunit C (253 aa).

Disordered stretches follow at residues 1-33 (MSPDTPRGGDLHPPEPDAAATAGPEGTPPDTEP) and 234-253 (IPVEYKGARIPPPDERRAYS).

Belongs to the complex I 30 kDa subunit family. NDH-1 is composed of 14 different subunits. Subunits NuoB, C, D, E, F, and G constitute the peripheral sector of the complex.

It localises to the cell membrane. The catalysed reaction is a quinone + NADH + 5 H(+)(in) = a quinol + NAD(+) + 4 H(+)(out). Its function is as follows. NDH-1 shuttles electrons from NADH, via FMN and iron-sulfur (Fe-S) centers, to quinones in the respiratory chain. The immediate electron acceptor for the enzyme in this species is believed to be a menaquinone. Couples the redox reaction to proton translocation (for every two electrons transferred, four hydrogen ions are translocated across the cytoplasmic membrane), and thus conserves the redox energy in a proton gradient. This chain is NADH-quinone oxidoreductase subunit C, found in Nocardia farcinica (strain IFM 10152).